We begin with the raw amino-acid sequence, 132 residues long: C-X-C motif chemokine 5 (132 aa).

An N-terminal signal peptide occupies residues 1–40 (MSLQLRSSARIPSGSISPFMRMAPLAFLLLFTLPQHLAEA). 2 disulfides stabilise this stretch: C53/C79 and C55/C95.

This sequence belongs to the intercrine alpha (chemokine CxC) family. Monomer. Homodimer. GCP-2(1-78) and GCP-2(9-78) are produced by proteolytic cleavage after secretion from fibroblasts and epithelial cells. GCP-2(9-78) is the most prominent form. A number of additional N-terminal (processed between pos. 41 and 48) and C-terminal (processed between pos. 118 and 132) processed forms have been identified, probably also representing intermediate states.

It localises to the secreted. Functionally, may participate in the recruitment of inflammatory cells by injured or infected tissue. GCP-2(1-78) and, more potent, GCP-2(9-78) attract neutrophils and are involved in neutrophil activation. The chain is C-X-C motif chemokine 5 (Cxcl5) from Mus musculus (Mouse).